The following is a 172-amino-acid chain: Small ribosomal subunit protein uS5c (172 aa).

Residues 15–78 enclose the S5 DRBM domain; that stretch reads WEEKVVQVKR…TDAKKHIINV (64 aa).

Belongs to the universal ribosomal protein uS5 family. Part of the 30S ribosomal subunit. Contacts protein S4.

The protein resides in the plastid. Its subcellular location is the chloroplast. Functionally, with S4 and S12 plays an important role in translational accuracy. In Gracilaria tenuistipitata var. liui (Red alga), this protein is Small ribosomal subunit protein uS5c (rps5).